The chain runs to 875 residues: Neurotrypsin (875 aa).

Residues 1–20 (MTLARFVLALMLGALPEVVG) form the signal peptide. N26 carries N-linked (GlcNAc...) asparagine glycosylation. Residues 29 to 88 (LHHSHRHSPPPGPHYPYYLPTQQRPPRTRPPPPLPRFPRPPRALPAQRPHALQAGHTPRP) are disordered. Positions 43-53 (YPYYLPTQQRP) are enriched in low complexity. Residues 56-71 (TRPPPPLPRFPRPPRA) show a composition bias toward pro residues. The 73-residue stretch at 93–165 (CPAGEPWVSV…GKVDWGYCDC (73 aa)) folds into the Kringle domain. Disulfide bonds link C93–C165, C109–C149, C138–C163, C195–C259, C208–C269, C239–C249, C305–C369, C318–C379, C349–C359, C412–C475, C425–C485, C455–C465, C525–C589, C538–C599, C569–C579, C619–C750, C661–C677, C765–C831, C794–C808, and C821–C850. 4 SRCR domains span residues 170–271 (VRLR…TCSF), 280–381 (IRLA…SCTP), 387–487 (IRLA…ACYP), and 500–601 (VRLV…ICDY). Residues 619 to 630 (CGLRLLHRRQKR) are zymogen activation region. The region spanning 631–874 (IIGGKNSLRG…FVPWIKSVTK (244 aa)) is the Peptidase S1 domain. H676 acts as the Charge relay system in catalysis. A glycan (N-linked (GlcNAc...) asparagine) is linked at N683. D726 serves as the catalytic Charge relay system. The active-site Charge relay system is the S825.

The protein belongs to the peptidase S1 family.

It localises to the secreted. Functionally, plays a role in neuronal plasticity and the proteolytic action may subserve structural reorganizations associated with learning and memory operations. The sequence is that of Neurotrypsin (PRSS12) from Pan troglodytes (Chimpanzee).